The chain runs to 38 residues: Large ribosomal subunit protein bL36 (38 aa).

Belongs to the bacterial ribosomal protein bL36 family.

This is Large ribosomal subunit protein bL36 from Baumannia cicadellinicola subsp. Homalodisca coagulata.